Consider the following 142-residue polypeptide: Protein-export protein SecB (142 aa).

This sequence belongs to the SecB family. Homotetramer, a dimer of dimers. One homotetramer interacts with 1 SecA dimer.

The protein resides in the cytoplasm. In terms of biological role, one of the proteins required for the normal export of preproteins out of the cell cytoplasm. It is a molecular chaperone that binds to a subset of precursor proteins, maintaining them in a translocation-competent state. It also specifically binds to its receptor SecA. The protein is Protein-export protein SecB of Buchnera aphidicola subsp. Acyrthosiphon pisum (strain 5A).